We begin with the raw amino-acid sequence, 141 residues long: Proteasome maturation protein (141 aa).

Lys-39 is covalently cross-linked (Glycyl lysine isopeptide (Lys-Gly) (interchain with G-Cter in SUMO2)). The short motif at 68 to 72 (RNIQG) is the High-affinity association with the preproteasome element.

Belongs to the POMP/UMP1 family. In terms of assembly, constituent of preproteasomes, but not of mature 20S proteasomes. Within the preproteasome, may directly interact with PSMB1/beta6, PSMB4/beta7, PSMB5/beta5, PSMB6/beta1 and PSMB9/beta1i. Interaction with PSMB8/beta5i has been observed in PubMed:10973495, but not in PubMed:10926487. Forms tetramers. As to expression, strongly expressed from the basal layer to the granular layer of healthy epidermis, whereas in KLICK patients there is a gradual decrease of expression toward the granular layer.

It localises to the cytoplasm. The protein localises to the cytosol. The protein resides in the nucleus. Its subcellular location is the microsome membrane. Its function is as follows. Molecular chaperone essential for the assembly of standard proteasomes and immunoproteasomes. Degraded after completion of proteasome maturation. Mediates the association of 20S preproteasome with the endoplasmic reticulum. The sequence is that of Proteasome maturation protein from Homo sapiens (Human).